Reading from the N-terminus, the 261-residue chain is Indole-3-glycerol phosphate synthase (261 aa).

Belongs to the TrpC family.

The enzyme catalyses 1-(2-carboxyphenylamino)-1-deoxy-D-ribulose 5-phosphate + H(+) = (1S,2R)-1-C-(indol-3-yl)glycerol 3-phosphate + CO2 + H2O. Its pathway is amino-acid biosynthesis; L-tryptophan biosynthesis; L-tryptophan from chorismate: step 4/5. The protein is Indole-3-glycerol phosphate synthase of Burkholderia pseudomallei (strain 1106a).